The primary structure comprises 520 residues: MSIKDEIESRKTFAIISHPDAGKTTLTEKLLLFGGAIREAGTVKGKKSGKFATSDWMKVEQERGISVTSSVMQFDYDDYNINILDTPGHEDFSEDTYRTLMAVDSAVMVIDCAKGIEPQTLKLFKVCKMRGIPIFTFINKLDRVGKEPFELLDEIEETLNIKTYPMNWPVGMGQNFFGIIDREQRTIEPFRDEEHLLHLNDDYELEEEHEITKDSTFSQAIDEFMLVEEAGEEFDNEMLLAGELTPVFFGSALANFGVQSFLNAYVDHAPMPNGRITKEAEEVSPFTPDFSGFIFKIQANMDPKHRDRIAFMRIVSGAFERGMDVKLQRTNKKQKITRSTSFMADDKETVNHAVAGDIIGLYDTGNYQIGDTLVGGNQKFSFEDLPQFTPELFMKVSAKNVMKQKHFHKGIEQLVQEGAIQYYKTLHTNQIILGAVGQLQFEVFEHRMKNEYNVDVVMEPVGRKIARWVENEDDIKDKMSTSRSILVQDRYEQKVFLFENEFATRWFEEKFPEIKLYSLL.

The tr-type G domain occupies 8 to 273 (ESRKTFAIIS…AYVDHAPMPN (266 aa)). GTP is bound by residues 17-24 (SHPDAGKT), 85-89 (DTPGH), and 139-142 (NKLD).

This sequence belongs to the TRAFAC class translation factor GTPase superfamily. Classic translation factor GTPase family. PrfC subfamily.

It localises to the cytoplasm. Its function is as follows. Increases the formation of ribosomal termination complexes and stimulates activities of RF-1 and RF-2. It binds guanine nucleotides and has strong preference for UGA stop codons. It may interact directly with the ribosome. The stimulation of RF-1 and RF-2 is significantly reduced by GTP and GDP, but not by GMP. This chain is Peptide chain release factor 3, found in Staphylococcus carnosus (strain TM300).